We begin with the raw amino-acid sequence, 797 residues long: LPS-assembly protein LptD (797 aa).

The N-terminal stretch at 1–30 (MKEGRKRLRAGYCYMLAGVVGVASTGSSRA) is a signal peptide.

The protein belongs to the LptD family. In terms of assembly, component of the lipopolysaccharide transport and assembly complex. Interacts with LptE and LptA.

It localises to the cell outer membrane. Its function is as follows. Together with LptE, is involved in the assembly of lipopolysaccharide (LPS) at the surface of the outer membrane. The polypeptide is LPS-assembly protein LptD (Hahella chejuensis (strain KCTC 2396)).